The chain runs to 436 residues: MTTTLFSSRIIQSALDFDVYKVNMMSAVAALYPDAMVSYKFIVRSEEDLSELLPEVKAEVLKLQDVRFTEDEIAYMKRVAPYLKPEFVEALRHFRFNPQSDVSFHNKTMSDGSSQLRITINGLWKETILYETIIMSIVSEVRSRQRWSDIPFEQFQTVLEDKVRYLKAELERRNITNFKFADMSTRRRFSFQAQRTMLEYLSKELPQCLTGTSNYHLARELDLTPIGTVAHEWFMGHQALVNVRDSQKIALQRWQKMFNGALGIALTDTIGIDAFLKDFDEELSHAYVGVRHDSGCPFTWGEKMIAHYESLGIDPMTKTLVFTDGLNFEQALDICEHFQGRVQVSFGIGTSLANDMGNYVNDQGEAYQPLSIVIKMVTCNGSPVAKISDEPEKAMCEDIFFLMNLKRRFEQPLDLNECRKLIDRLESEGQNYLIDA.

H231 carries the post-translational modification Phosphohistidine; by autocatalysis.

It belongs to the NAPRTase family. Post-translationally, transiently phosphorylated on a His residue during the reaction cycle. Phosphorylation strongly increases the affinity for substrates and increases the rate of nicotinate D-ribonucleotide production. Dephosphorylation regenerates the low-affinity form of the enzyme, leading to product release.

The enzyme catalyses nicotinate + 5-phospho-alpha-D-ribose 1-diphosphate + ATP + H2O = nicotinate beta-D-ribonucleotide + ADP + phosphate + diphosphate. It participates in cofactor biosynthesis; NAD(+) biosynthesis; nicotinate D-ribonucleotide from nicotinate: step 1/1. Its function is as follows. Catalyzes the synthesis of beta-nicotinate D-ribonucleotide from nicotinate and 5-phospho-D-ribose 1-phosphate at the expense of ATP. The sequence is that of Nicotinate phosphoribosyltransferase from Vibrio parahaemolyticus serotype O3:K6 (strain RIMD 2210633).